The following is a 131-amino-acid chain: Small ribosomal subunit protein uS8 (131 aa).

Belongs to the universal ribosomal protein uS8 family. In terms of assembly, part of the 30S ribosomal subunit. Contacts proteins S5 and S12.

Its function is as follows. One of the primary rRNA binding proteins, it binds directly to 16S rRNA central domain where it helps coordinate assembly of the platform of the 30S subunit. The polypeptide is Small ribosomal subunit protein uS8 (Chlorobaculum tepidum (strain ATCC 49652 / DSM 12025 / NBRC 103806 / TLS) (Chlorobium tepidum)).